Here is a 245-residue protein sequence, read N- to C-terminus: tRNA pseudouridine synthase A (245 aa).

Aspartate 52 functions as the Nucleophile in the catalytic mechanism. Tyrosine 111 is a binding site for substrate.

The protein belongs to the tRNA pseudouridine synthase TruA family. Homodimer.

The enzyme catalyses uridine(38/39/40) in tRNA = pseudouridine(38/39/40) in tRNA. Formation of pseudouridine at positions 38, 39 and 40 in the anticodon stem and loop of transfer RNAs. The sequence is that of tRNA pseudouridine synthase A from Thermotoga neapolitana (strain ATCC 49049 / DSM 4359 / NBRC 107923 / NS-E).